A 120-amino-acid chain; its full sequence is Ribonuclease P protein component (120 aa).

This sequence belongs to the RnpA family. Consists of a catalytic RNA component (M1 or rnpB) and a protein subunit.

The enzyme catalyses Endonucleolytic cleavage of RNA, removing 5'-extranucleotides from tRNA precursor.. Its function is as follows. RNaseP catalyzes the removal of the 5'-leader sequence from pre-tRNA to produce the mature 5'-terminus. It can also cleave other RNA substrates such as 4.5S RNA. The protein component plays an auxiliary but essential role in vivo by binding to the 5'-leader sequence and broadening the substrate specificity of the ribozyme. This is Ribonuclease P protein component from Blochmanniella floridana.